Reading from the N-terminus, the 953-residue chain is Translation initiation factor IF-2 (953 aa).

Disordered stretches follow at residues 52-241 and 279-363; these read KASK…QQEA and TKLK…TERK. Basic and acidic residues-rich tracts occupy residues 80 to 89, 98 to 111, and 140 to 188; these read TGSEHVEKTQ, FKAE…EQAA, and QGDK…ENHK. Over residues 191 to 207 the composition is skewed to polar residues; sequence RFTNQKKQGRQEPQSKS. Residues 229–241 are compositionally biased toward basic and acidic residues; sequence RQSETRFRAQQEA. Over residues 282–291 the composition is skewed to polar residues; that stretch reads KSSNISAKST. Residues 300-317 show a composition bias toward basic and acidic residues; the sequence is ARPEKNRELTHHSQEGQK. A compositionally biased stretch (low complexity) spans 322 to 338; that stretch reads SWNSQNQVRNQKNSNWN. Residues 339-348 show a composition bias toward basic residues; the sequence is KNKKTKKGKN. Positions 454–623 constitute a tr-type G domain; sequence ERAPVVTIMG…LLVAEVEELK (170 aa). Positions 463–470 are G1; sequence GHVDHGKT. 463–470 is a binding site for GTP; the sequence is GHVDHGKT. Residues 488 to 492 form a G2 region; that stretch reads GITQH. The interval 509–512 is G3; it reads DTPG. GTP-binding positions include 509–513 and 563–566; these read DTPGH and NKID. Residues 563-566 are G4; it reads NKID. The interval 599–601 is G5; that stretch reads SAK.

Belongs to the TRAFAC class translation factor GTPase superfamily. Classic translation factor GTPase family. IF-2 subfamily.

It is found in the cytoplasm. Its function is as follows. One of the essential components for the initiation of protein synthesis. Protects formylmethionyl-tRNA from spontaneous hydrolysis and promotes its binding to the 30S ribosomal subunits. Also involved in the hydrolysis of GTP during the formation of the 70S ribosomal complex. This chain is Translation initiation factor IF-2, found in Streptococcus pyogenes serotype M4 (strain MGAS10750).